The sequence spans 440 residues: Transposon Ty1-ML1 Gag polyprotein (440 aa).

3 stretches are compositionally biased toward polar residues: residues 1-23 (MESQQLSNYPNISHGSACASVTS), 48-60 (TKANSQQTTTPAS), and 127-152 (QSQFPQYPSSVGTPLSTPSPESGNTF). 3 disordered regions span residues 1 to 88 (MESQ…YPQQ), 126 to 173 (PQSQ…RPPP), and 352 to 440 (GSRN…PETY). The segment covering 153 to 165 (TDSSSADSDMTST) has biased composition (low complexity). An RNA-binding region spans residues 299–401 (NNGIHINNKV…NSKSKTARAH (103 aa)). Residues 402-418 (NVSTSNNSPSTDNDSIS) are compositionally biased toward low complexity. Ser-416 bears the Phosphoserine mark. Polar residues predominate over residues 419–428 (KSTTEPIQLN). The segment covering 429-440 (NKHDLHLRPETY) has biased composition (basic and acidic residues).

Homotrimer.

It localises to the cytoplasm. In terms of biological role, capsid protein (CA) is the structural component of the virus-like particle (VLP), forming the shell that encapsulates the retrotransposons dimeric RNA genome. The particles are assembled from trimer-clustered units and there are holes in the capsid shells that allow for the diffusion of macromolecules. CA also has nucleocapsid-like chaperone activity, promoting primer tRNA(i)-Met annealing to the multipartite primer-binding site (PBS), dimerization of Ty1 RNA and initiation of reverse transcription. The chain is Transposon Ty1-ML1 Gag polyprotein (TY1A-ML1) from Saccharomyces cerevisiae (strain ATCC 204508 / S288c) (Baker's yeast).